The chain runs to 104 residues: Pterin-4-alpha-carbinolamine dehydratase (104 aa).

At Ala2 the chain carries N-acetylalanine. Substrate-binding positions include 61–63 (DHH) and 78–81 (STHE).

Belongs to the pterin-4-alpha-carbinolamine dehydratase family. In terms of assembly, homotetramer and homodimer. Heterotetramer with HNF1A; formed by a dimer of dimers. Interacts with HNF1B (via HNF-p1 domain); the interaction increases HNF1B transactivation activity.

The protein resides in the cytoplasm. It is found in the nucleus. The enzyme catalyses (4aS,6R)-4a-hydroxy-L-erythro-5,6,7,8-tetrahydrobiopterin = (6R)-L-erythro-6,7-dihydrobiopterin + H2O. Its function is as follows. Involved in tetrahydrobiopterin biosynthesis. Seems to both prevent the formation of 7-pterins and accelerate the formation of quinonoid-BH2. Coactivator for HNF1A-dependent transcription. Regulates the dimerization of homeodomain protein HNF1A and enhances its transcriptional activity. Also acts as a coactivator for HNF1B-dependent transcription. The polypeptide is Pterin-4-alpha-carbinolamine dehydratase (PCBD1) (Bos taurus (Bovine)).